We begin with the raw amino-acid sequence, 240 residues long: UDP-2,3-diacylglucosamine hydrolase (240 aa).

5 residues coordinate Mn(2+): Asp-8, His-10, Asp-41, Asn-79, and His-114. 79–80 serves as a coordination point for substrate; it reads NR. Residues Asp-122, Ser-160, Asn-164, Lys-167, and His-195 each coordinate substrate. The Mn(2+) site is built by His-195 and His-197.

Belongs to the LpxH family. Mn(2+) serves as cofactor.

Its subcellular location is the cell inner membrane. It carries out the reaction UDP-2-N,3-O-bis[(3R)-3-hydroxytetradecanoyl]-alpha-D-glucosamine + H2O = 2-N,3-O-bis[(3R)-3-hydroxytetradecanoyl]-alpha-D-glucosaminyl 1-phosphate + UMP + 2 H(+). The protein operates within glycolipid biosynthesis; lipid IV(A) biosynthesis; lipid IV(A) from (3R)-3-hydroxytetradecanoyl-[acyl-carrier-protein] and UDP-N-acetyl-alpha-D-glucosamine: step 4/6. In terms of biological role, hydrolyzes the pyrophosphate bond of UDP-2,3-diacylglucosamine to yield 2,3-diacylglucosamine 1-phosphate (lipid X) and UMP by catalyzing the attack of water at the alpha-P atom. Involved in the biosynthesis of lipid A, a phosphorylated glycolipid that anchors the lipopolysaccharide to the outer membrane of the cell. The protein is UDP-2,3-diacylglucosamine hydrolase of Escherichia coli O17:K52:H18 (strain UMN026 / ExPEC).